Consider the following 1112-residue polypeptide: DNA-directed RNA polymerase subunit beta (1112 aa).

Residues 1087 to 1112 (VGGRRTPNRPTYENIGGPREMEFSED) form a disordered region.

The protein belongs to the RNA polymerase beta chain family. As to quaternary structure, in cyanobacteria the RNAP catalytic core is composed of 2 alpha, 1 beta, 1 beta', 1 gamma and 1 omega subunit. When a sigma factor is associated with the core the holoenzyme is formed, which can initiate transcription.

The enzyme catalyses RNA(n) + a ribonucleoside 5'-triphosphate = RNA(n+1) + diphosphate. In terms of biological role, DNA-dependent RNA polymerase catalyzes the transcription of DNA into RNA using the four ribonucleoside triphosphates as substrates. This is DNA-directed RNA polymerase subunit beta from Gloeobacter violaceus (strain ATCC 29082 / PCC 7421).